We begin with the raw amino-acid sequence, 509 residues long: Inositol-3-phosphate synthase 1 (509 aa).

Belongs to the myo-inositol 1-phosphate synthase family. NAD(+) serves as cofactor. In terms of tissue distribution, highly expressed in anthers, but transcripts are undetectable in roots, leaves, flowers and embryos.

The protein localises to the cytoplasm. The catalysed reaction is D-glucose 6-phosphate = 1D-myo-inositol 3-phosphate. The protein operates within polyol metabolism; myo-inositol biosynthesis; myo-inositol from D-glucose 6-phosphate: step 1/2. Key enzyme in myo-inositol biosynthesis pathway that catalyzes the conversion of glucose 6-phosphate to 1-myo-inositol 1-phosphate in a NAD-dependent manner. Is a key enzyme in the phytic acid biosynthesis pathway in seeds. In Oryza sativa subsp. japonica (Rice), this protein is Inositol-3-phosphate synthase 1.